Here is a 464-residue protein sequence, read N- to C-terminus: Argininosuccinate lyase (464 aa).

The protein belongs to the lyase 1 family. Argininosuccinate lyase subfamily.

It is found in the cytoplasm. The catalysed reaction is 2-(N(omega)-L-arginino)succinate = fumarate + L-arginine. Its pathway is amino-acid biosynthesis; L-arginine biosynthesis; L-arginine from L-ornithine and carbamoyl phosphate: step 3/3. The protein is Argininosuccinate lyase of Koribacter versatilis (strain Ellin345).